We begin with the raw amino-acid sequence, 180 residues long: Required for excision 1-B domain-containing protein (180 aa).

The tract at residues 1-23 (MITAEAASESTVPAVPGDTAATG) is disordered.

The protein is Required for excision 1-B domain-containing protein of Bos taurus (Bovine).